A 92-amino-acid chain; its full sequence is Protein EMB-1 (92 aa).

Basic and acidic residues-rich tracts occupy residues 1–16, 37–61, and 72–92; these read MASQQEKKELDARARQ, AEGRSKGGQTRKEQLGGEGYHEMGR, and GGERAEQEGIDIDESKFRTKK. The interval 1–92 is disordered; sequence MASQQEKKEL…IDESKFRTKK (92 aa).

Belongs to the small hydrophilic plant seed protein family. In terms of tissue distribution, expressed in embryogenic cells, somatic embryos and seeds at the later stages of development. In the embryos, expressed in the procambium, the root and shoot meristem and the protoderm of the cotyledons. Not detected in the endosperm or the aleurone layer, in young leaves or roots.

The protein resides in the nucleus. The protein is Protein EMB-1 of Daucus carota (Wild carrot).